Here is a 600-residue protein sequence, read N- to C-terminus: DNA mismatch repair protein MutL (600 aa).

Residues 327–405 (DGSRAATTGA…FSPQPAAAEP (79 aa)) are disordered. The segment covering 349–367 (PNSQRPQTAWSAETSSSRP) has biased composition (polar residues).

It belongs to the DNA mismatch repair MutL/HexB family.

Its function is as follows. This protein is involved in the repair of mismatches in DNA. It is required for dam-dependent methyl-directed DNA mismatch repair. May act as a 'molecular matchmaker', a protein that promotes the formation of a stable complex between two or more DNA-binding proteins in an ATP-dependent manner without itself being part of a final effector complex. The protein is DNA mismatch repair protein MutL of Rhizobium johnstonii (strain DSM 114642 / LMG 32736 / 3841) (Rhizobium leguminosarum bv. viciae).